Reading from the N-terminus, the 269-residue chain is Short-chain dehydrogenase/reductase ABA4 (269 aa).

Positions 34, 80, 144, 174, 178, 207, and 209 each coordinate NADP(+). Tyr174 acts as the Proton donor in catalysis. The active-site Lowers pKa of active site Tyr is Lys178.

Belongs to the short-chain dehydrogenases/reductases (SDR) family.

The protein operates within hormone biosynthesis. Its function is as follows. Short-chain dehydrogenase/reductase involved in the biosynthesis of abscisic acid (ABA), a phytohormone that acts antagonistically toward salicylic acid (SA), jasmonic acid (JA) and ethylene (ETH) signaling, to impede plant defense responses. During pathogen-host interaction, ABA plays a dual role in disease severity by increasing plant susceptibility and accelerating pathogenesis in the fungus itself. The first step of the pathway catalyzes the reaction from farnesyl diphosphate to alpha-ionylideneethane performed by the alpha-ionylideneethane synthase ABA3 via a three-step reaction mechanism involving 2 neutral intermediates, beta-farnesene and allofarnesene. The cytochrome P450 monooxygenase ABA1 might then be involved in the conversion of alpha-ionylideneethane to alpha-ionylideneacetic acid. Alpha-ionylideneacetic acid is further converted to abscisic acid in 2 steps involving the cytochrome P450 monooxygenase ABA2 and the short-chain dehydrogenase/reductase ABA4, via the intermediates 1'-deoxy-ABA or 1',4'-trans-diol-ABA, depending on the order of action of these 2 enzymes. ABA2 is responsible for the hydroxylation of carbon atom C-1' and ABA4 might be involved in the oxidation of the C-4' carbon atom. This is Short-chain dehydrogenase/reductase ABA4 (ABA4) from Pyricularia oryzae (strain Y34) (Rice blast fungus).